Here is a 142-residue protein sequence, read N- to C-terminus: ATP synthase epsilon chain (142 aa).

It belongs to the ATPase epsilon chain family. F-type ATPases have 2 components, CF(1) - the catalytic core - and CF(0) - the membrane proton channel. CF(1) has five subunits: alpha(3), beta(3), gamma(1), delta(1), epsilon(1). CF(0) has three main subunits: a, b and c.

It localises to the cell inner membrane. Functionally, produces ATP from ADP in the presence of a proton gradient across the membrane. This chain is ATP synthase epsilon chain, found in Actinobacillus succinogenes (strain ATCC 55618 / DSM 22257 / CCUG 43843 / 130Z).